We begin with the raw amino-acid sequence, 231 residues long: Phosphoglycolate phosphatase (231 aa).

Asp9 functions as the Nucleophile in the catalytic mechanism. 2 residues coordinate Mg(2+): Asp9 and Asp11. Lys154 provides a ligand contact to substrate. Mg(2+) is bound by residues Asp177 and Asp181.

Belongs to the archaeal SPP-like hydrolase family. The cofactor is Mg(2+).

The enzyme catalyses 2-phosphoglycolate + H2O = glycolate + phosphate. In terms of biological role, catalyzes the dephosphorylation of 2-phosphoglycolate. The polypeptide is Phosphoglycolate phosphatase (Pyrococcus furiosus (strain ATCC 43587 / DSM 3638 / JCM 8422 / Vc1)).